Consider the following 495-residue polypeptide: MLLFAPTPPPSPATAHRRPGGSAASCIRCSSVRELDRSPSRPPLPPLAEAKRVVLVRHGQSTWNADGRIQGSSDFSVLTPKGESQAETSRLMLLADSFDACFTSPLARSRRTAEIIWDTRDKDLIPDYDLREIDLYSFQGLLKHEGKEKYGALFQQWQKNPSDCSIDGHYPVRELWDRAQGCWERILTHEGKSVLVVAHNAVNQALVATSLGLGTEYFRTLLQSNCGASVLDFTPQPGGRPPSVCLNRLNQTPSSPISAESSAGRKSSKRIILVCQGATQSSSEGSLGGVGYAPLNMLGVIQAQKTAELLLDLKVNSIICSPQVAAVDTATAICEVQEAAGCLGADCVPRYVEMKNLLGLEIDDAFLTKQKSLEQIVQSGWMGGMEHQKLKTLWAQSEDAWQALVNELPEDDGAESDRVVVAIGHPAIHLGLLCRCLNLTMDYMPSFHLDDGSISVIDFPDGPKGGGIVRCTNYTAHLGRWSVPITKSTENNDEF.

Over residues 1–12 (MLLFAPTPPPSP) the composition is skewed to pro residues. Residues 1-23 (MLLFAPTPPPSPATAHRRPGGSA) are disordered. The transit peptide at 1–50 (MLLFAPTPPPSPATAHRRPGGSAASCIRCSSVRELDRSPSRPPLPPLAEA) directs the protein to the chloroplast. Histidine 58 functions as the Tele-phosphohistidine intermediate in the catalytic mechanism. The active-site Proton donor/acceptor is glutamate 132.

It belongs to the phosphoglycerate mutase family.

The protein resides in the plastid. The protein localises to the chloroplast stroma. The catalysed reaction is 2-carboxy-D-arabinitol 1-phosphate + H2O = 2-carboxy-D-arabinitol + phosphate. Inactivated by oxidized glutathione (GSSG) at pH 8.0. In terms of biological role, phosphoglycerate mutase-like protein lacking PGM activity, but having 2-carboxy-D-arabinitol 1-phosphate (CA1P) phosphatase activity. Can dephosphorylate the closely related compounds 2-carboxy-D-arabinitol 1,5-bisphosphate (CABP) and 2-carboxy-D-ribitol-1,5-bisphosphate(CRBP), and 2,3-diphosphoglycerate. Prevents the accumulation of D-glycero-2,3-pentodiulose-1,5-bisphosphate (PDBP) a potent inhibitor of ribulose-1,5-bisphosphate carboxylase (RuBisCO). PDBP is produced during the oxidation of ribulose-1,5-bisphosphate, the substrate of RuBisCO. This Triticum aestivum (Wheat) protein is 2-carboxy-D-arabinitol-1-phosphatase.